The primary structure comprises 447 residues: Tubulin alpha chain (447 aa).

Positions 11, 71, 144, 145, 179, 206, and 228 each coordinate GTP. Glutamate 71 contributes to the Mg(2+) binding site. Glutamate 254 is a catalytic residue.

This sequence belongs to the tubulin family. In terms of assembly, dimer of alpha and beta chains. A typical microtubule is a hollow water-filled tube with an outer diameter of 25 nm and an inner diameter of 15 nM. Alpha-beta heterodimers associate head-to-tail to form protofilaments running lengthwise along the microtubule wall with the beta-tubulin subunit facing the microtubule plus end conferring a structural polarity. Microtubules usually have 13 protofilaments but different protofilament numbers can be found in some organisms and specialized cells. Mg(2+) serves as cofactor.

It is found in the cytoplasm. The protein resides in the cytoskeleton. The enzyme catalyses GTP + H2O = GDP + phosphate + H(+). In terms of biological role, tubulin is the major constituent of microtubules, a cylinder consisting of laterally associated linear protofilaments composed of alpha- and beta-tubulin heterodimers. Microtubules grow by the addition of GTP-tubulin dimers to the microtubule end, where a stabilizing cap forms. Below the cap, tubulin dimers are in GDP-bound state, owing to GTPase activity of alpha-tubulin. This Avena sativa (Oat) protein is Tubulin alpha chain (TUBA).